Consider the following 72-residue polypeptide: Movement protein TGBp3 (72 aa).

Over 1–2 (MS) the chain is Lumenal. Residues 3–23 (LSFSLIVFAVGVAVSIGVLTL) form a helical membrane-spanning segment. Residues 24–72 (TTQQSSSYCLILVDGAKAVVEGCHLRQDIPAILSELKPASSPFNPLFCS) lie on the Cytoplasmic side of the membrane.

This sequence belongs to the Tymovirales TGBp3 protein family.

The protein resides in the host endoplasmic reticulum membrane. Functionally, plays a role in viral cell-to-cell propagation, by facilitating genome transport to neighboring plant cells through plasmosdesmata. May induce the formation of granular vesicles derived from the Endoplasmic reticulum, which align on actin filaments. This Lolium latent virus (isolate Lolium/USA/US1/-) (LoLV) protein is Movement protein TGBp3 (ORF4).